The sequence spans 289 residues: 4-hydroxy-3-methylbut-2-enyl diphosphate reductase (289 aa).

Cys12 lines the [4Fe-4S] cluster pocket. Residues His41 and His84 each contribute to the (2E)-4-hydroxy-3-methylbut-2-enyl diphosphate site. Dimethylallyl diphosphate contacts are provided by His41 and His84. His41 and His84 together coordinate isopentenyl diphosphate. Cys106 is a binding site for [4Fe-4S] cluster. His134 contacts (2E)-4-hydroxy-3-methylbut-2-enyl diphosphate. Dimethylallyl diphosphate is bound at residue His134. His134 serves as a coordination point for isopentenyl diphosphate. Catalysis depends on Glu136, which acts as the Proton donor. Residue Ser172 participates in (2E)-4-hydroxy-3-methylbut-2-enyl diphosphate binding. Cys200 contacts [4Fe-4S] cluster. 3 residues coordinate (2E)-4-hydroxy-3-methylbut-2-enyl diphosphate: Ser229, Asn231, and Ser273. Dimethylallyl diphosphate is bound by residues Ser229, Asn231, and Ser273. Isopentenyl diphosphate contacts are provided by Ser229, Asn231, and Ser273.

This sequence belongs to the IspH family. It depends on [4Fe-4S] cluster as a cofactor.

The catalysed reaction is isopentenyl diphosphate + 2 oxidized [2Fe-2S]-[ferredoxin] + H2O = (2E)-4-hydroxy-3-methylbut-2-enyl diphosphate + 2 reduced [2Fe-2S]-[ferredoxin] + 2 H(+). It catalyses the reaction dimethylallyl diphosphate + 2 oxidized [2Fe-2S]-[ferredoxin] + H2O = (2E)-4-hydroxy-3-methylbut-2-enyl diphosphate + 2 reduced [2Fe-2S]-[ferredoxin] + 2 H(+). The protein operates within isoprenoid biosynthesis; dimethylallyl diphosphate biosynthesis; dimethylallyl diphosphate from (2E)-4-hydroxy-3-methylbutenyl diphosphate: step 1/1. It participates in isoprenoid biosynthesis; isopentenyl diphosphate biosynthesis via DXP pathway; isopentenyl diphosphate from 1-deoxy-D-xylulose 5-phosphate: step 6/6. In terms of biological role, catalyzes the conversion of 1-hydroxy-2-methyl-2-(E)-butenyl 4-diphosphate (HMBPP) into a mixture of isopentenyl diphosphate (IPP) and dimethylallyl diphosphate (DMAPP). Acts in the terminal step of the DOXP/MEP pathway for isoprenoid precursor biosynthesis. This chain is 4-hydroxy-3-methylbut-2-enyl diphosphate reductase, found in Opitutus terrae (strain DSM 11246 / JCM 15787 / PB90-1).